A 175-amino-acid polypeptide reads, in one-letter code: Adenine phosphoribosyltransferase (175 aa).

It belongs to the purine/pyrimidine phosphoribosyltransferase family. In terms of assembly, homodimer.

It localises to the cytoplasm. The catalysed reaction is AMP + diphosphate = 5-phospho-alpha-D-ribose 1-diphosphate + adenine. Its pathway is purine metabolism; AMP biosynthesis via salvage pathway; AMP from adenine: step 1/1. Functionally, catalyzes a salvage reaction resulting in the formation of AMP, that is energically less costly than de novo synthesis. The protein is Adenine phosphoribosyltransferase of Lactobacillus delbrueckii subsp. bulgaricus (strain ATCC 11842 / DSM 20081 / BCRC 10696 / JCM 1002 / NBRC 13953 / NCIMB 11778 / NCTC 12712 / WDCM 00102 / Lb 14).